The following is a 64-amino-acid chain: MVTKVKCPTCKTELEWGPQSPFRPFCSKRCQLIDLGEWADEEKRIPGPINPDLLPYPDEGEQWQ.

C7, C10, C26, and C30 together coordinate Zn(2+). The tract at residues 43-64 (KRIPGPINPDLLPYPDEGEQWQ) is disordered.

It belongs to the DNA gyrase inhibitor YacG family. In terms of assembly, interacts with GyrB. Requires Zn(2+) as cofactor.

In terms of biological role, inhibits all the catalytic activities of DNA gyrase by preventing its interaction with DNA. Acts by binding directly to the C-terminal domain of GyrB, which probably disrupts DNA binding by the gyrase. This chain is DNA gyrase inhibitor YacG, found in Aeromonas salmonicida (strain A449).